The sequence spans 268 residues: Tryptophan synthase alpha chain (268 aa).

Active-site proton acceptor residues include Glu49 and Asp60.

It belongs to the TrpA family. In terms of assembly, tetramer of two alpha and two beta chains.

The enzyme catalyses (1S,2R)-1-C-(indol-3-yl)glycerol 3-phosphate + L-serine = D-glyceraldehyde 3-phosphate + L-tryptophan + H2O. The protein operates within amino-acid biosynthesis; L-tryptophan biosynthesis; L-tryptophan from chorismate: step 5/5. In terms of biological role, the alpha subunit is responsible for the aldol cleavage of indoleglycerol phosphate to indole and glyceraldehyde 3-phosphate. The chain is Tryptophan synthase alpha chain from Salmonella agona (strain SL483).